We begin with the raw amino-acid sequence, 399 residues long: Transcription factor UNE10 (399 aa).

Disordered stretches follow at residues 119 to 158 (QSKPGGVGSTRVGSCSDGRTMGGGKRARVAPEWSGGGSQR) and 173 to 228 (MGSH…RRDK). A compositionally biased stretch (basic and acidic residues) spans 178–201 (NTIDDHDSVCHSRPQMEDEEEKKA). The bHLH domain occupies 213-262 (RAAAIHNQSERKRRDKINQRMKTLQKLVPNSSKTDKASMLDEVIEYLKQL).

As to quaternary structure, homodimer. Associates to PTAC12/HMR/PAP5 which acts as a transcriptional coactivator. Interacts with the Pfr form of phyB but barely with that of phyA. Binds to COP1. Post-translationally, ubiquitinated and subsequently targeted to protein degradation by COP1 in the dark, but not in far-red light. Mainly expressed in stems, leaves, seedlings, fruits and flowers, and, to a lower extent, in roots.

The protein localises to the nucleus. With respect to regulation, stabilized by phyA but destabilized by phyB. Accumulates in the dark but not in far-red light upon MG132 treatment, a 26S proteasome inhibitor (at protein level). Transcription factor binding to G-box elements (5'-CACGTG-3') in target genes promoters, particularly in far-red light but barely in the dark. Required during the fertilization of ovules by pollen. Repressor of phytochrome A-mediated far-red light responses including seed germination, suppression of hypocotyl elongation, and randomization of hypocotyl growth orientation. Does not inhibit phyB-induced red light responses. The chain is Transcription factor UNE10 from Arabidopsis thaliana (Mouse-ear cress).